The chain runs to 381 residues: Alkanesulfonate monooxygenase (381 aa).

It belongs to the SsuD family. As to quaternary structure, homotetramer.

The enzyme catalyses an alkanesulfonate + FMNH2 + O2 = an aldehyde + FMN + sulfite + H2O + 2 H(+). Functionally, catalyzes the desulfonation of aliphatic sulfonates. This Escherichia coli O81 (strain ED1a) protein is Alkanesulfonate monooxygenase.